Consider the following 90-residue polypeptide: RNA-binding protein Hfq (90 aa).

The Sm domain occupies 9-68 (EPFLNTLRKEKVPVSIYLVNGIKLQGQIESFDQFVVLLRNNVNQMVYKHAISTIVPARRV).

Belongs to the Hfq family. In terms of assembly, homohexamer.

In terms of biological role, RNA chaperone that binds small regulatory RNA (sRNAs) and mRNAs to facilitate mRNA translational regulation in response to envelope stress, environmental stress and changes in metabolite concentrations. Also binds with high specificity to tRNAs. The sequence is that of RNA-binding protein Hfq from Halorhodospira halophila (strain DSM 244 / SL1) (Ectothiorhodospira halophila (strain DSM 244 / SL1)).